The primary structure comprises 235 residues: Serine protease SplA (235 aa).

The N-terminal stretch at 1–35 (MNKNVMVKGLTALTILTSLGFAENISNQPHSIAKA) is a signal peptide. Residues H74, D113, and S189 each act as charge relay system in the active site.

Belongs to the peptidase S1B family.

It is found in the secreted. The chain is Serine protease SplA (splA) from Staphylococcus aureus (strain USA300).